The sequence spans 262 residues: MNKLFSFWKRKNETRSRTSSDPSIGQGYKLREKDLKKLHRAASVGDLKKLKEYLQLKKYDVNMQDKKYRTPLHLACANGHRDVVLFLIEQQCKINIRDSENKSPLIKAVQCQNEDCATILLNCGADPNLRDVRYNTALHYAVCGQSFSLVEQLLDYEADLEAKNKDGYTPLLVAVINNNPKMVKFLLEKGADVNASDNYQRTALILAVSGEPTRLVKLLLQQGVELSCRDICGFTAEEYAYFNGFTVYPQFTASHGRKKHVK.

ANK repeat units lie at residues 67-96 (KYRTPLHLACANGHRDVVLFLIEQQCKINI), 100-129 (ENKSPLIKAVQCQNEDCATILLNCGADPNL), 133-162 (RYNTALHYAVCGQSFSLVEQLLDYEADLEA), 166-195 (DGYTPLLVAVINNNPKMVKFLLEKGADVNA), and 199-228 (YQRTALILAVSGEPTRLVKLLLQQGVELSC).

The protein is Ankyrin repeat domain-containing protein 7 (ANKRD7) of Macaca fascicularis (Crab-eating macaque).